Here is a 66-residue protein sequence, read N- to C-terminus: Stress-induced protein KIN1 (66 aa).

Over residues 1 to 13 (MSETNKNAFQAGQ) the composition is skewed to polar residues. The tract at residues 1 to 52 (MSETNKNAFQAGQTAGKAEEKSNVLLDKAKDAAAGAGAGAQQAGKSVSDAAA) is disordered. The span at 17–31 (KAEEKSNVLLDKAKD) shows a compositional bias: basic and acidic residues. Repeats lie at residues 31 to 35 (DAAAG) and 49 to 53 (DAAAG). Residues 32–45 (AAAGAGAGAQQAGK) show a composition bias toward low complexity.

The chain is Stress-induced protein KIN1 (KIN1) from Arabidopsis thaliana (Mouse-ear cress).